The sequence spans 117 residues: Hydrogenase maturation factor HypA (117 aa).

H2 lines the Ni(2+) pocket. Residues C73, C76, C92, and C95 each coordinate Zn(2+).

The protein belongs to the HypA/HybF family.

Functionally, involved in the maturation of [NiFe] hydrogenases. Required for nickel insertion into the metal center of the hydrogenase. The protein is Hydrogenase maturation factor HypA of Solidesulfovibrio magneticus (strain ATCC 700980 / DSM 13731 / RS-1) (Desulfovibrio magneticus).